The chain runs to 212 residues: ER lumen protein-retaining receptor 2 (212 aa).

Topologically, residues 1-4 (MNIF) are lumenal. The helical transmembrane segment at 5-24 (RLTGDLSHLAAIVILLLKIW) threads the bilayer. Residues 25 to 32 (KTRSCAGI) lie on the Cytoplasmic side of the membrane. A helical membrane pass occupies residues 33-52 (SGKSQLLFALVFTTRYLDLF). Residues 47–48 (RY) are interaction with the K-D-E-L motif on target proteins. At 53–58 (TSFISL) the chain is on the lumenal side. A helical transmembrane segment spans residues 59–79 (YNTSMKLIYIACSYATVYLIY). The Cytoplasmic portion of the chain corresponds to 80-92 (MKFKATYDGNHDT). The chain crosses the membrane as a helical span at residues 93–110 (FRVEFLVVPVGGLSFLVN). Residues 111-116 (HDFSPL) are Lumenal-facing. A helical transmembrane segment spans residues 117–135 (EILWTFSIYLESVAILPQL). The Cytoplasmic portion of the chain corresponds to 136-149 (FMISKTGEAETITT). A helical transmembrane segment spans residues 150 to 168 (HYLFFLGLYRALYLVNWIW). Positions 159–169 (RALYLVNWIWR) are interaction with the K-D-E-L motif on target proteins. Topologically, residues 169 to 178 (RFYFEGFFDL) are lumenal. Residues 179–199 (IAVVAGVVQTILYCDFFYLYI) form a helical membrane-spanning segment. The Cytoplasmic portion of the chain corresponds to 200–212 (TKVLKGKKLSLPA). The tract at residues 204–207 (KGKK) is important for recycling of cargo proteins with the sequence motif K-D-E-L from the Golgi to the endoplasmic reticulum.

Belongs to the ERD2 family.

It localises to the endoplasmic reticulum membrane. Its subcellular location is the golgi apparatus membrane. It is found in the cytoplasmic vesicle. The protein resides in the COPI-coated vesicle membrane. In terms of biological role, membrane receptor that binds the K-D-E-L sequence motif in the C-terminal part of endoplasmic reticulum resident proteins and maintains their localization in that compartment by participating to their vesicle-mediated recycling back from the Golgi. Binding is pH dependent, and is optimal at pH 5-5.4. The sequence is that of ER lumen protein-retaining receptor 2 (Kdelr2) from Mus musculus (Mouse).